Reading from the N-terminus, the 841-residue chain is Probable outer membrane protein pmp2 (841 aa).

The N-terminal stretch at 1 to 24 (MKIPLRFLLISLVPTLSMSNLLGA) is a signal peptide. An Autotransporter domain is found at 537–841 (GAPYEKRFWV…NVDAGSKIKF (305 aa)).

This sequence belongs to the PMP outer membrane protein family.

Its subcellular location is the secreted. The protein resides in the cell wall. The protein localises to the cell outer membrane. This Chlamydia pneumoniae (Chlamydophila pneumoniae) protein is Probable outer membrane protein pmp2 (pmp2).